The chain runs to 456 residues: RuvB-like 1 (456 aa).

The interval 1–20 is disordered; sequence MKIEEVKSTTKTQRIASHSH. Residue 70–77 participates in ATP binding; the sequence is GPPGTGKT.

The protein belongs to the RuvB family. In terms of assembly, forms homohexameric rings. Can form a dodecamer with ruvbl2 made of two stacked hexameric rings. Is a component of the RNA polymerase II holoenzyme complex. Component of the chromatin-remodeling Ino80 complex. Component of some MLL1/MLL complex.

The protein localises to the nucleus. It is found in the dynein axonemal particle. The enzyme catalyses ATP + H2O = ADP + phosphate + H(+). Functionally, has single-stranded DNA-stimulated ATPase and ATP-dependent DNA helicase (3' to 5') activity suggesting a role in nuclear processes such as recombination and transcription. Proposed core component of the chromatin remodeling Ino80 complex which exhibits DNA- and nucleosome-activated ATPase activity and catalyzes ATP-dependent nucleosome sliding. May act as a negative regulator of embryonic heart growth. In Danio rerio (Zebrafish), this protein is RuvB-like 1 (ruvbl1).